The chain runs to 361 residues: MAGNTIGQLFRVTTFGESHGLALGCIVDGVPPGIPLTEADLQHDLDRRRPGTSRYTTQRREPDQVKILSGIFEGVTTGTSIGLLIENTDQRSQDYSAIKDVFRPGHADYTYEQKYGLRDYRGGGRSSARETAMRVAAGAIAKKYLAEKFGIEIRGCLTQMGDIPLEIKDWSQVEQNPFFCPDPDKIDALDELMRALKKEGDSIGAKVTVVASGVPAGLGEPVFDRLDADIAHALMSINAVKGVEIGDGFDVVALRGSQNRDEITKDGFQSNHAGGILGGISSGQQIIAHMALKPTSSITVPGRTINRFGEEVEMITKGRHDPCVGIRAVPIAEAMLAIVLMDHLLRQRAQNADVKTDIPRW.

2 residues coordinate NADP(+): Arg48 and Arg54. Residues 125 to 127 (RSS), 238 to 239 (NA), Gly278, 293 to 297 (KPTSS), and Arg319 each bind FMN.

The protein belongs to the chorismate synthase family. In terms of assembly, homotetramer. FMNH2 serves as cofactor.

It catalyses the reaction 5-O-(1-carboxyvinyl)-3-phosphoshikimate = chorismate + phosphate. The protein operates within metabolic intermediate biosynthesis; chorismate biosynthesis; chorismate from D-erythrose 4-phosphate and phosphoenolpyruvate: step 7/7. Catalyzes the anti-1,4-elimination of the C-3 phosphate and the C-6 proR hydrogen from 5-enolpyruvylshikimate-3-phosphate (EPSP) to yield chorismate, which is the branch point compound that serves as the starting substrate for the three terminal pathways of aromatic amino acid biosynthesis. This reaction introduces a second double bond into the aromatic ring system. This chain is Chorismate synthase, found in Escherichia coli O7:K1 (strain IAI39 / ExPEC).